We begin with the raw amino-acid sequence, 171 residues long: Ly6/PLAUR domain-containing protein 6 (171 aa).

Positions 1 to 25 (MEPSPALAWLLLLSLVADCLKAAQS) are cleaved as a signal peptide. Residues 47-141 (FKCFTCEKAA…PRNDTDATFA (95 aa)) enclose the UPAR/Ly6 domain. 6 disulfides stabilise this stretch: cysteine 49–cysteine 77, cysteine 52–cysteine 61, cysteine 70–cysteine 96, cysteine 102–cysteine 121, cysteine 107–cysteine 118, and cysteine 122–cysteine 127. Residues 88 to 90 (NSI) carry the NxI motif motif. Residues asparagine 134 and asparagine 147 are each glycosylated (N-linked (GlcNAc...) asparagine). Asparagine 147 carries the GPI-anchor amidated asparagine lipid modification. Residues 148 to 171 (QTNGHPHCVSVIVSCLWVWLGLTL) constitute a propeptide, removed in mature form.

In terms of assembly, interacts with nicotinic acetylcholine receptors (nAChRs) including CHRNA3, CHRNA4, CHRNA5, CHRNA6, CHRNA7, CHRNB2 and CHRNB4. Interacts (via NxI motif) with LRP6. In terms of tissue distribution, expressed at high levels in the cortex and cerebellum of the brain, at moderate levels in the lung, kidney, and liver, and at low levels in the heart and prostate (at protein level). Expressed in neurons (at protein level).

It is found in the secreted. The protein localises to the cytoplasm. The protein resides in the cell membrane. Its subcellular location is the synapse. It localises to the synaptosome. It is found in the membrane raft. The protein localises to the cell projection. The protein resides in the dendrite. Its subcellular location is the perikaryon. Functionally, acts as a modulator of nicotinic acetylcholine receptors (nAChRs) function in the brain. Inhibits nicotine-induced Ca(2+) influx through nAChRs. In vitro, specifically inhibits alpha-3:beta-4 and alpha-7 nAChR currents in an allosteric manner. Acts as a positive regulator of Wnt/beta-catenin signaling. The sequence is that of Ly6/PLAUR domain-containing protein 6 (Lypd6) from Rattus norvegicus (Rat).